The primary structure comprises 293 residues: MSIERLGYLGFAVKDVPAWDHFLTKSVGLMAAGSAGDAALYRADQRAWRIAVQPGELDDLAYAGLEVDDAAALERMADKLRQAGVAFTRGDEALMQQRKVMGLLCLQDPFGLPLEIYYGPAEIFHEPFLPSAPVSGFVTGDQGIGHFVRCVPDTAKAMAFYTEVLGFVLSDIIDIQMGPETSVPAHFLHCNGRHHTIALAAFPIPKRIHHFMLQANTIDDVGYAFDRLDAAGRITSLLGRHTNDQTLSFYADTPSPMIEVEFGWGPRTVDSSWTVARHSRTAMWGHKSVRGQR.

2 VOC domains span residues 5-119 (RLGY…IYYG) and 143-265 (GIGH…FGWG). H146, H210, and E261 together coordinate Fe cation.

This sequence belongs to the extradiol ring-cleavage dioxygenase family. Homooctamer. Fe(2+) is required as a cofactor.

It catalyses the reaction biphenyl-2,3-diol + O2 = 2-hydroxy-6-oxo-6-phenylhexa-2,4-dienoate + H(+). It functions in the pathway xenobiotic degradation; biphenyl degradation; 2-hydroxy-2,4-pentadienoate and benzoate from biphenyl: step 3/4. This is Biphenyl-2,3-diol 1,2-dioxygenase (bphC) from Pseudomonas sp. (strain KKS102).